The following is a 177-amino-acid chain: MSRVAKAPVVIPAGVEVKLNGQDISIKGKNGELSRKIHDAVEVKQADNALTFAPREGFVDGWAQAGTTRALLNAMVIGVTEGFTKKLQLVGVGYRAAVKGNVVNLSLGFSHPVDHALPAGITAECPSQTEIVLKGADKQVIGQVAAELRAYRRPEPYKGKGVRYADEVVRTKEAKKK.

It belongs to the universal ribosomal protein uL6 family. In terms of assembly, part of the 50S ribosomal subunit.

In terms of biological role, this protein binds to the 23S rRNA, and is important in its secondary structure. It is located near the subunit interface in the base of the L7/L12 stalk, and near the tRNA binding site of the peptidyltransferase center. The protein is Large ribosomal subunit protein uL6 of Pectobacterium carotovorum subsp. carotovorum (strain PC1).